A 124-amino-acid polypeptide reads, in one-letter code: MSLLRCRPRDLPSVSLSVLFLVSFVASMSTESLSPTPGPESSRWSLVRARVLEMVEPLVTRTRDRWQWFWGPGAVQGFMQTYYEDHLKDLGPRTQAWLQSSRDHLLNKTHSLCPRLLCKDRTQG.

The signal sequence occupies residues Met-1–Ser-27. N-linked (GlcNAc...) asparagine glycosylation occurs at Asn-107.

It belongs to the apolipoprotein C4 family. In terms of tissue distribution, expressed by the liver and secreted in plasma.

The protein resides in the secreted. Functionally, may participate in lipoprotein metabolism. The sequence is that of Apolipoprotein C-IV (Apoc4) from Mus musculus (Mouse).